An 818-amino-acid polypeptide reads, in one-letter code: Histone H2A deubiquitinase MYSM1 (818 aa).

Residues 107-158 (SSPVKWTKEEKNLFEQGLATFGRRWTSIARLIGSRSVLQVKNYARHYFKNKC) form the SANT domain. The SWIRM domain occupies 344–442 (IKPPDQELEI…FGCEQAIYNR (99 aa)). An MPN domain is found at 548 to 680 (VKVSCEAMLV…PHPQSQVACL (133 aa)). 3 residues coordinate Zn(2+): histidine 627, histidine 629, and aspartate 640. Residues 627 to 640 (HSHPAFDPNPSIRD) carry the JAMM motif motif. Positions 745 to 749 (LQKLL) match the LXXLL motif motif.

It belongs to the peptidase M67A family. MYSM1 subfamily.

It localises to the nucleus. Functionally, metalloprotease that specifically deubiquitinates monoubiquitinated histone H2A, a specific tag for epigenetic transcriptional repression, thereby acting as a coactivator. Preferentially deubiquitinates monoubiquitinated H2A in hyperacetylated nucleosomes. Deubiquitination of histone H2A leads to facilitate the phosphorylation and dissociation of histone H1 from the nucleosome. Acts as a coactivator by participating in the initiation and elongation steps of androgen receptor (AR)-induced gene activation. This Xenopus laevis (African clawed frog) protein is Histone H2A deubiquitinase MYSM1 (mysm1).